A 183-amino-acid chain; its full sequence is CKLF-like MARVEL transmembrane domain-containing protein 6 (183 aa).

Position 1 is an N-acetylmethionine (methionine 1). The Cytoplasmic portion of the chain corresponds to 1-39; the sequence is MENGAVYSPTTEEDPGPARGPRSGLAAYFFMGRLPLLRR. Residue serine 8 is modified to Phosphoserine. The MARVEL domain occupies 33–160; that stretch reads RLPLLRRVLK…DFITMLYEKR (128 aa). A helical transmembrane segment spans residues 40-60; the sequence is VLKGLQLLLSLLAFICEEVVS. The Extracellular portion of the chain corresponds to 61-67; the sequence is QCTLCGG. Residues 68–88 form a helical membrane-spanning segment; that stretch reads LYFFEFVSCSAFLLSLLILIV. Over 89-106 the chain is Cytoplasmic; that stretch reads YCTPFYERVDTTKVKSSD. A helical membrane pass occupies residues 107–127; that stretch reads FYITLGTGCVFLLASIIFVST. At 128-134 the chain is on the extracellular side; the sequence is HDRTSAE. Residues 135-155 traverse the membrane as a helical segment; the sequence is IAAIVFGFIASFMFLLDFITM. The Cytoplasmic segment spans residues 156–183; it reads LYEKRQESQLRKPENTTRAEALTEPLNA. Phosphothreonine is present on threonine 171.

The protein belongs to the chemokine-like factor family. In terms of assembly, interacts with PD-L1/CD274 (via transmembrane domain); the interaction is direct. Interacts with CMTM4. Interacts with CD58, ARG1, ENO1 and TMPO. Expressed in the leukocytes, placenta and testis.

The protein localises to the cell membrane. Its subcellular location is the early endosome membrane. It localises to the recycling endosome membrane. Functionally, master regulator of recycling and plasma membrane expression of PD-L1/CD274, an immune inhibitory ligand critical for immune tolerance to self and antitumor immunity. Associates with both constitutive and IFNG-induced PD-L1/CD274 at recycling endosomes, where it protects PD-L1/CD274 from being targeted for lysosomal degradation, likely by preventing its STUB1-mediated ubiquitination. May stabilize PD-L1/CD274 expression on antigen presenting cells and potentiates inhibitory signaling by PDCD1/CD279, its receptor on T-cells, ultimately triggering T-cell anergy. This Homo sapiens (Human) protein is CKLF-like MARVEL transmembrane domain-containing protein 6.